We begin with the raw amino-acid sequence, 76 residues long: Translational regulator CsrA (76 aa).

The protein belongs to the CsrA/RsmA family. As to quaternary structure, homodimer; the beta-strands of each monomer intercalate to form a hydrophobic core, while the alpha-helices form wings that extend away from the core.

The protein localises to the cytoplasm. Functionally, a translational regulator that binds mRNA to regulate translation initiation and/or mRNA stability. Usually binds in the 5'-UTR at or near the Shine-Dalgarno sequence preventing ribosome-binding, thus repressing translation. Its main target seems to be the major flagellin gene, while its function is anatagonized by FliW. The protein is Translational regulator CsrA of Pseudothermotoga lettingae (strain ATCC BAA-301 / DSM 14385 / NBRC 107922 / TMO) (Thermotoga lettingae).